The chain runs to 177 residues: Alkyl hydroperoxide reductase AhpD (177 aa).

The Proton donor role is filled by Cys-131. Cys-131 and Cys-134 are joined by a disulfide. The active-site Cysteine sulfenic acid (-SOH) intermediate is Cys-134.

It belongs to the AhpD family.

The enzyme catalyses N(6)-[(R)-dihydrolipoyl]-L-lysyl-[lipoyl-carrier protein] + a hydroperoxide = N(6)-[(R)-lipoyl]-L-lysyl-[lipoyl-carrier protein] + an alcohol + H2O. Its function is as follows. Antioxidant protein with alkyl hydroperoxidase activity. Required for the reduction of the AhpC active site cysteine residues and for the regeneration of the AhpC enzyme activity. This Solibacter usitatus (strain Ellin6076) protein is Alkyl hydroperoxide reductase AhpD.